The following is a 216-amino-acid chain: MIF4G domain-containing protein A (216 aa).

The region spanning 2-199 (DSAWTALDME…LEILEFRASG (198 aa)) is the MIF4G domain.

This sequence belongs to the MIF4GD family. Interacts with eif4g1, eif4g2 and slbp; probably tethered by SLBP to the 3'-end of mRNAs ending with the histone stem-loop, it also interacts with eif4g1 which is bound to their 5'-end.

It is found in the cytoplasm. The protein localises to the nucleus. Functions in replication-dependent translation of histone mRNAs which differ from other eukaryotic mRNAs in that they do not end with a poly-A tail but a stem-loop. May participate in circularizing those mRNAs specifically enhancing their translation. This Danio rerio (Zebrafish) protein is MIF4G domain-containing protein A (mif4gda).